We begin with the raw amino-acid sequence, 735 residues long: Muskelin (735 aa).

At A2 the chain carries N-acetylalanine. Residues 172-204 (REQEAIRLCLKHFRQHNYTEAFESLQKKTKIAL) form the LisH domain. In terms of domain architecture, CTLH spans 206 to 258 (HPMLTDMHDKLVLKGDFDACEELIEKAVNDGLFNQYISQQEYKPRWSQIIPKS). Kelch repeat units follow at residues 284-330 (TVYL…SCHK), 339-391 (QIYT…FDHQ), 400-458 (MIYT…SRIG), 469-515 (CLYV…TGFT), 526-578 (EIHV…SLQE), and 597-651 (VHYL…AQMD).

Homodimer; may form higher oligomers. Identified in the CTLH complex that contains GID4, RANBP9 and/or RANBP10, MKLN1, MAEA, RMND5A (or alternatively its paralog RMND5B), GID8, ARMC8, WDR26 and YPEL5. Within this complex, MAEA, RMND5A (or alternatively its paralog RMND5B), GID8, WDR26, and RANBP9 and/or RANBP10 form the catalytic core, while GID4, MKLN1, ARMC8 and YPEL5 have ancillary roles. Interacts with RANBP9. Part of a complex consisting of RANBP9, MKLN1 and GID8. Interacts with GABRA1. Interacts with the C-terminal tail of PTGER3.

It is found in the cytoplasm. The protein localises to the cell projection. The protein resides in the ruffle. It localises to the cell cortex. Its subcellular location is the synapse. It is found in the postsynapse. Component of the CTLH E3 ubiquitin-protein ligase complex that selectively accepts ubiquitin from UBE2H and mediates ubiquitination and subsequent proteasomal degradation of the transcription factor HBP1. Required for internalization of the GABA receptor GABRA1 from the cell membrane via endosomes and subsequent GABRA1 degradation. Acts as a mediator of cell spreading and cytoskeletal responses to the extracellular matrix component THBS1. The chain is Muskelin (Mkln1) from Rattus norvegicus (Rat).